Consider the following 530-residue polypeptide: Estrogen receptor beta (530 aa).

The modulating stretch occupies residues 1-148; that stretch reads MEIKNSPSSL…SPSAKRDAHF (148 aa). At Ser-61 the chain carries Phosphoserine; alternate. Residue Ser-61 is glycosylated (O-linked (GlcNAc) serine; alternate). 2 positions are modified to phosphoserine; by MAPK: Ser-87 and Ser-105. NR C4-type zinc fingers lie at residues 149-169 and 185-209; these read CAVC…CEGC and CPAT…LRKC. A DNA-binding region (nuclear receptor) is located at residues 149-214; that stretch reads CAVCSDYASG…RLRKCYEVGM (66 aa). The NR LBD domain maps to 264-498; the sequence is SPEQLVLTLL…DLLLEMLNAH (235 aa). The span at 506–515 shows a compositional bias: polar residues; sequence SISGSECCST. Positions 506–530 are disordered; that stretch reads SISGSECCSTEDSKSKEGSQNLQSQ.

Belongs to the nuclear hormone receptor family. NR3 subfamily. As to quaternary structure, binds DNA as a homodimer. Can form a heterodimer with ESR1. Interacts with NCOA1, NCOA3, NCOA5 and NCOA6 coactivators, leading to a strong increase of transcription of target genes. Interacts with UBE1C and AKAP13. Interacts with DNTTIP2. Interacts with CCDC62 in the presence of estradiol/E2; this interaction seems to enhance the transcription of target genes. Interacts with DNAAF4. Interacts with PRMT2. Interacts with CCAR2 (via N-terminus) in a ligand-independent manner. Interacts with RBM39, in the presence of estradiol (E2). Interacts with STUB1/CHIP. Post-translationally, phosphorylation at Ser-87 and Ser-105 recruits NCOA1. Expressed in prostate, ovary, Leydig cells and in epithelium of the efferent ductules and of the initial segment of the epididymis.

It is found in the nucleus. Functionally, nuclear hormone receptor. Binds estrogens with an affinity similar to that of ESR1/ER-alpha, and activates expression of reporter genes containing estrogen response elements (ERE) in an estrogen-dependent manner. The chain is Estrogen receptor beta (Esr2) from Mus musculus (Mouse).